A 206-amino-acid chain; its full sequence is MARYTEANCRLCRREGLKLYLKGDRCYTDKCAFSRRGYAPGQHGQSRKKISNYGLQLREKQKAKRIYGVLEKQFRTYYKRADKARGITGENLLVLLEMRLDNVVYRLGYGDSRKESRQLVTHGHFLVNGKKVNIPSFNVSVNDVITVSEKSRATEKFKTFIENPRTLPNWLEGNLENFEGKVVSQPSREDIDVPVNETLIVELYSK.

Residues 98–164 (MRLDNVVYRL…EKFKTFIENP (67 aa)) enclose the S4 RNA-binding domain.

Belongs to the universal ribosomal protein uS4 family. In terms of assembly, part of the 30S ribosomal subunit. Contacts protein S5. The interaction surface between S4 and S5 is involved in control of translational fidelity.

In terms of biological role, one of the primary rRNA binding proteins, it binds directly to 16S rRNA where it nucleates assembly of the body of the 30S subunit. Its function is as follows. With S5 and S12 plays an important role in translational accuracy. This is Small ribosomal subunit protein uS4 from Clostridium tetani (strain Massachusetts / E88).